The sequence spans 462 residues: Siroheme synthase (462 aa).

Residues 1–201 form a precorrin-2 dehydrogenase /sirohydrochlorin ferrochelatase region; that stretch reads MQFLPLFHKL…GKPEEGERLL (201 aa). NAD(+)-binding positions include 22 to 23 and 43 to 44; these read EV and PE. Ser126 is subject to Phosphoserine. Residues 214 to 462 form a uroporphyrinogen-III C-methyltransferase region; that stretch reads GEVYLVGAGP…AWFEGAQGSL (249 aa). Residue Pro223 participates in S-adenosyl-L-methionine binding. Asp246 serves as the catalytic Proton acceptor. Residue Lys268 is the Proton donor of the active site. S-adenosyl-L-methionine-binding positions include 299–301, Ile304, 329–330, Met381, and Gly410; these read GGD and TA.

It in the N-terminal section; belongs to the precorrin-2 dehydrogenase / sirohydrochlorin ferrochelatase family. The protein in the C-terminal section; belongs to the precorrin methyltransferase family.

The catalysed reaction is uroporphyrinogen III + 2 S-adenosyl-L-methionine = precorrin-2 + 2 S-adenosyl-L-homocysteine + H(+). The enzyme catalyses precorrin-2 + NAD(+) = sirohydrochlorin + NADH + 2 H(+). It carries out the reaction siroheme + 2 H(+) = sirohydrochlorin + Fe(2+). The protein operates within cofactor biosynthesis; adenosylcobalamin biosynthesis; precorrin-2 from uroporphyrinogen III: step 1/1. It participates in cofactor biosynthesis; adenosylcobalamin biosynthesis; sirohydrochlorin from precorrin-2: step 1/1. Its pathway is porphyrin-containing compound metabolism; siroheme biosynthesis; precorrin-2 from uroporphyrinogen III: step 1/1. It functions in the pathway porphyrin-containing compound metabolism; siroheme biosynthesis; siroheme from sirohydrochlorin: step 1/1. The protein operates within porphyrin-containing compound metabolism; siroheme biosynthesis; sirohydrochlorin from precorrin-2: step 1/1. In terms of biological role, multifunctional enzyme that catalyzes the SAM-dependent methylations of uroporphyrinogen III at position C-2 and C-7 to form precorrin-2 via precorrin-1. Then it catalyzes the NAD-dependent ring dehydrogenation of precorrin-2 to yield sirohydrochlorin. Finally, it catalyzes the ferrochelation of sirohydrochlorin to yield siroheme. The protein is Siroheme synthase of Ectopseudomonas mendocina (strain ymp) (Pseudomonas mendocina).